The chain runs to 103 residues: Pyrimidine/purine nucleoside phosphorylase (103 aa).

The protein belongs to the nucleoside phosphorylase PpnP family.

The catalysed reaction is a purine D-ribonucleoside + phosphate = a purine nucleobase + alpha-D-ribose 1-phosphate. The enzyme catalyses adenosine + phosphate = alpha-D-ribose 1-phosphate + adenine. It catalyses the reaction cytidine + phosphate = cytosine + alpha-D-ribose 1-phosphate. It carries out the reaction guanosine + phosphate = alpha-D-ribose 1-phosphate + guanine. The catalysed reaction is inosine + phosphate = alpha-D-ribose 1-phosphate + hypoxanthine. The enzyme catalyses thymidine + phosphate = 2-deoxy-alpha-D-ribose 1-phosphate + thymine. It catalyses the reaction uridine + phosphate = alpha-D-ribose 1-phosphate + uracil. It carries out the reaction xanthosine + phosphate = alpha-D-ribose 1-phosphate + xanthine. Catalyzes the phosphorolysis of diverse nucleosides, yielding D-ribose 1-phosphate and the respective free bases. Can use uridine, adenosine, guanosine, cytidine, thymidine, inosine and xanthosine as substrates. Also catalyzes the reverse reactions. This is Pyrimidine/purine nucleoside phosphorylase from Sulfurimonas denitrificans (strain ATCC 33889 / DSM 1251) (Thiomicrospira denitrificans (strain ATCC 33889 / DSM 1251)).